The primary structure comprises 801 residues: Phenylalanine--tRNA ligase beta subunit (801 aa).

Positions 39–152 (ARAFSGVVVG…TDAPIGTDIR (114 aa)) constitute a tRNA-binding domain. The region spanning 407-482 (PARAPITLPI…RIYGYDNIPS (76 aa)) is the B5 domain. Residues Asp460, Asp466, Glu469, and Glu470 each contribute to the Mg(2+) site. Residues 706–799 (SKFPQVRRDI…LTVEHSAQLR (94 aa)) enclose the FDX-ACB domain.

Belongs to the phenylalanyl-tRNA synthetase beta subunit family. Type 1 subfamily. In terms of assembly, tetramer of two alpha and two beta subunits. Mg(2+) is required as a cofactor.

It localises to the cytoplasm. The enzyme catalyses tRNA(Phe) + L-phenylalanine + ATP = L-phenylalanyl-tRNA(Phe) + AMP + diphosphate + H(+). In Psychrobacter arcticus (strain DSM 17307 / VKM B-2377 / 273-4), this protein is Phenylalanine--tRNA ligase beta subunit.